The primary structure comprises 431 residues: Serine hydroxymethyltransferase 2 (431 aa).

Residues leucine 131 and 135 to 137 each bind (6S)-5,6,7,8-tetrahydrofolate; that span reads GHL. Lysine 240 is modified (N6-(pyridoxal phosphate)lysine). Glutamate 256 lines the (6S)-5,6,7,8-tetrahydrofolate pocket.

It belongs to the SHMT family. As to quaternary structure, homodimer. It depends on pyridoxal 5'-phosphate as a cofactor.

It is found in the cytoplasm. The enzyme catalyses (6R)-5,10-methylene-5,6,7,8-tetrahydrofolate + glycine + H2O = (6S)-5,6,7,8-tetrahydrofolate + L-serine. Its pathway is one-carbon metabolism; tetrahydrofolate interconversion. It functions in the pathway amino-acid biosynthesis; glycine biosynthesis; glycine from L-serine: step 1/1. Its function is as follows. Catalyzes the reversible interconversion of serine and glycine with tetrahydrofolate (THF) serving as the one-carbon carrier. This reaction serves as the major source of one-carbon groups required for the biosynthesis of purines, thymidylate, methionine, and other important biomolecules. Also exhibits THF-independent aldolase activity toward beta-hydroxyamino acids, producing glycine and aldehydes, via a retro-aldol mechanism. In Vibrio vulnificus (strain CMCP6), this protein is Serine hydroxymethyltransferase 2.